A 101-amino-acid polypeptide reads, in one-letter code: Small ribosomal subunit protein uS14 (101 aa).

This sequence belongs to the universal ribosomal protein uS14 family. As to quaternary structure, part of the 30S ribosomal subunit. Contacts proteins S3 and S10.

Its function is as follows. Binds 16S rRNA, required for the assembly of 30S particles and may also be responsible for determining the conformation of the 16S rRNA at the A site. The polypeptide is Small ribosomal subunit protein uS14 (Hydrogenovibrio crunogenus (strain DSM 25203 / XCL-2) (Thiomicrospira crunogena)).